Here is a 467-residue protein sequence, read N- to C-terminus: Chromosomal replication initiator protein DnaA (467 aa).

Residues 1-80 form a domain I, interacts with DnaA modulators region; it reads MTSELWHQCL…APRISLKIGS (80 aa). The segment at 80–130 is domain II; that stretch reads SITGNSKGQQASKDSAVGATRTTAPSRPVIADVAPSGERNVTVEGAIKHES. The domain III, AAA+ region stretch occupies residues 131 to 347; it reads YLNPTFTFET…GALKLVIANA (217 aa). Residues Gly-175, Gly-177, Lys-178, and Thr-179 each coordinate ATP. The segment at 348–467 is domain IV, binds dsDNA; the sequence is HFTGQEITPA…YQNFMRMLTS (120 aa).

It belongs to the DnaA family. In terms of assembly, oligomerizes as a right-handed, spiral filament on DNA at oriC.

Its subcellular location is the cytoplasm. Plays an essential role in the initiation and regulation of chromosomal replication. ATP-DnaA binds to the origin of replication (oriC) to initiate formation of the DNA replication initiation complex once per cell cycle. Binds the DnaA box (a 9 base pair repeat at the origin) and separates the double-stranded (ds)DNA. Forms a right-handed helical filament on oriC DNA; dsDNA binds to the exterior of the filament while single-stranded (ss)DNA is stabiized in the filament's interior. The ATP-DnaA-oriC complex binds and stabilizes one strand of the AT-rich DNA unwinding element (DUE), permitting loading of DNA polymerase. After initiation quickly degrades to an ADP-DnaA complex that is not apt for DNA replication. Binds acidic phospholipids. The sequence is that of Chromosomal replication initiator protein DnaA from Hahella chejuensis (strain KCTC 2396).